Here is a 431-residue protein sequence, read N- to C-terminus: Fumarylacetoacetase (431 aa).

Position 133 (D133) interacts with Ca(2+). Y135 is a substrate binding site. The active-site Proton acceptor is H140. R149 contacts substrate. Ca(2+) contacts are provided by E209, E211, and D243. Residue D243 coordinates Mg(2+). The substrate site is built by Q250 and Y254. K263 and T267 together coordinate Mg(2+). T362 lines the substrate pocket.

This sequence belongs to the FAH family. The cofactor is Ca(2+). Mg(2+) serves as cofactor.

It carries out the reaction 4-fumarylacetoacetate + H2O = acetoacetate + fumarate + H(+). It functions in the pathway amino-acid degradation; L-phenylalanine degradation; acetoacetate and fumarate from L-phenylalanine: step 6/6. Use of phenylalanine and phenylacetate as a carbon source. This chain is Fumarylacetoacetase (fahA), found in Emericella nidulans (strain FGSC A4 / ATCC 38163 / CBS 112.46 / NRRL 194 / M139) (Aspergillus nidulans).